A 123-amino-acid polypeptide reads, in one-letter code: Ig heavy chain V region HPCM6 (123 aa).

Positions 1-114 constitute an Ig-like domain; sequence EVKLVESGGG…YPHWYFDVWG (114 aa).

This is Ig heavy chain V region HPCM6 from Mus musculus (Mouse).